The primary structure comprises 475 residues: Dihydrolipoyl dehydrogenase (475 aa).

FAD is bound by residues 36 to 45 (ERYSTLGGVC), Lys-54, and Gly-117. Cys-45 and Cys-50 are disulfide-bonded. Residues 182 to 186 (GGGII), Glu-205, Val-238, and 270 to 273 (AIGR) contribute to the NAD(+) site. FAD contacts are provided by Asp-313 and Ala-321. Residue His-445 is the Proton acceptor of the active site.

It belongs to the class-I pyridine nucleotide-disulfide oxidoreductase family. Requires FAD as cofactor.

Its subcellular location is the cytoplasm. The catalysed reaction is N(6)-[(R)-dihydrolipoyl]-L-lysyl-[protein] + NAD(+) = N(6)-[(R)-lipoyl]-L-lysyl-[protein] + NADH + H(+). Its function is as follows. The branched-chain alpha-keto dehydrogenase complex catalyzes the overall conversion of alpha-keto acids to acyl-CoA and CO(2). It contains multiple copies of 3 enzymatic components: branched-chain alpha-keto acid decarboxylase (E1), lipoamide acyltransferase (E2) and lipoamide dehydrogenase (E3). The protein is Dihydrolipoyl dehydrogenase (lpd) of Vibrio parahaemolyticus serotype O3:K6 (strain RIMD 2210633).